Consider the following 43-residue polypeptide: Protein PsbN 1 (43 aa).

Residues 3–23 traverse the membrane as a helical segment; sequence TATILGILIAAAVVGITVLAL.

Belongs to the PsbN family.

It localises to the cellular thylakoid membrane. In terms of biological role, may play a role in photosystem I and II biogenesis. The polypeptide is Protein PsbN 1 (Microcystis aeruginosa (strain NIES-843 / IAM M-2473)).